Reading from the N-terminus, the 363-residue chain is S-adenosylmethionine:tRNA ribosyltransferase-isomerase (363 aa).

Belongs to the QueA family. As to quaternary structure, monomer.

The protein localises to the cytoplasm. It catalyses the reaction 7-aminomethyl-7-carbaguanosine(34) in tRNA + S-adenosyl-L-methionine = epoxyqueuosine(34) in tRNA + adenine + L-methionine + 2 H(+). Its pathway is tRNA modification; tRNA-queuosine biosynthesis. In terms of biological role, transfers and isomerizes the ribose moiety from AdoMet to the 7-aminomethyl group of 7-deazaguanine (preQ1-tRNA) to give epoxyqueuosine (oQ-tRNA). The sequence is that of S-adenosylmethionine:tRNA ribosyltransferase-isomerase from Magnetococcus marinus (strain ATCC BAA-1437 / JCM 17883 / MC-1).